A 354-amino-acid polypeptide reads, in one-letter code: MGLCQSAEDKELTLKSKAIDKEMMANHMSQAKVVKLLLLGAGECGKSTVLKQMRILHDHGFTAEESEQQKSVVFNNTLQAMISILKGMESLRMTFDKPIRENDAKFVMEAHKMLQEAKVFPEELANALQALYSDKGIQTVMAKGNEFQMPESAPHFLGSLDRIKLPDYTPTEQDILLSRIKTTGIVEVKFQMKSVDFRVFDVGGQRSERKKWIHCFEDVNAIIFIAAISEYDQVLFEDETTNRMIESMRLFESICNSRWFINTSMILFLNKKDLFAEKIKRTSIKSAFPDYKGAQTYDESCRYIEEKFDGLNANPEKTIYMHQTCATDTDQVQMILDSVIDMIIQANLQGCGLY.

Gly2 carries the N-myristoyl glycine lipid modification. Cys4 carries S-palmitoyl cysteine lipidation. Residues 32–354 (KVVKLLLLGA…QANLQGCGLY (323 aa)) form the G-alpha domain. Residues 35 to 48 (KLLLLGAGECGKST) form a G1 motif region. GTP is bound by residues 40-47 (GAGECGKS), 176-182 (LLSRIKT), 201-205 (DVGGQ), 270-273 (NKKD), and Ala326. The Mg(2+) site is built by Ser47 and Thr182. The interval 174-182 (DILLSRIKT) is G2 motif. Positions 197 to 206 (FRVFDVGGQR) are G3 motif. A G4 motif region spans residues 266–273 (ILFLNKKD). The segment at 324–329 (TCATDT) is G5 motif.

It belongs to the G-alpha family. G(q) subfamily. G proteins are composed of 3 units; alpha, beta and gamma. The alpha chain contains the guanine nucleotide binding site.

Guanine nucleotide-binding proteins (G proteins) are involved as modulators or transducers in various transmembrane signaling systems. Promotes transcription of 3',5'-cyclic phosphodiesterases pde-1 and pde-5, leading to reduced cGMP levels in sensory neurons. This causes suppression of insulin production and signaling which leads to increased daf-16 activity and contributes to increased adult lifespan and resistance to oxidative stress. In addition, by reducing cGMP levels, inhibits TGF-beta signaling pathways. Involved in behavioral response to P.aeruginosa by controlling the expression of daf-7, a member of the TGF-beta family, in ASJ sensory neurons. This chain is Guanine nucleotide-binding protein alpha-3 subunit (gpa-3), found in Caenorhabditis briggsae.